A 191-amino-acid chain; its full sequence is Fe/S biogenesis protein NfuA (191 aa).

Residues cysteine 149 and cysteine 152 each coordinate [4Fe-4S] cluster.

It belongs to the NfuA family. In terms of assembly, homodimer. [4Fe-4S] cluster is required as a cofactor.

In terms of biological role, involved in iron-sulfur cluster biogenesis. Binds a 4Fe-4S cluster, can transfer this cluster to apoproteins, and thereby intervenes in the maturation of Fe/S proteins. Could also act as a scaffold/chaperone for damaged Fe/S proteins. In Photorhabdus laumondii subsp. laumondii (strain DSM 15139 / CIP 105565 / TT01) (Photorhabdus luminescens subsp. laumondii), this protein is Fe/S biogenesis protein NfuA.